A 419-amino-acid chain; its full sequence is Putative nucleobase-ascorbate transporter 9 (419 aa).

Gly residues predominate over residues 1–22; sequence MANGAGNGGGGAGGNGGGGNNG. A disordered region spans residues 1–28; the sequence is MANGAGNGGGGAGGNGGGGNNGAGNRAE. A run of 10 helical transmembrane segments spans residues 64-84, 91-111, 113-133, 153-173, 184-204, 220-240, 273-293, 313-333, 334-354, and 370-390; these read LLSLGITVLIPSLLVPLMGGG, VIQTLLFVSGLTTLFQSFFGT, LPVIASASYAYIIPITSIIYS, IQGALIITGCFQVLVCFLGVW, SIAPLVTFTGLGLYHIGFPLV, GMMLCIPVVWLFAQLLTSSGV, SFAMMAASFVTLFESTGLFYA, RVIQISAAFMLFFSIFGKFGA, FFASIPLPIMASLYCIVLCFV, and FNTKFILGFSFFMAISIPQYF.

This sequence belongs to the nucleobase:cation symporter-2 (NCS2) (TC 2.A.40) family.

It is found in the membrane. In Arabidopsis thaliana (Mouse-ear cress), this protein is Putative nucleobase-ascorbate transporter 9 (NAT9).